We begin with the raw amino-acid sequence, 412 residues long: Glucose/galactose transporter (412 aa).

Transmembrane regions (helical) follow at residues 21-41 (YGFA…ITCL), 62-82 (LIQF…GQLV), 90-110 (GIVV…PAAS), 113-133 (VYAL…ILQV), 158-178 (FNSL…LSAA), 192-212 (FPYL…AILK), 239-259 (LGAI…SFLV), 310-330 (AFVA…IAMW), 331-351 (SVLA…SLAL), 363-383 (GILC…GALA), and 388-408 (IHLA…YGLI).

It belongs to the major facilitator superfamily. FHS transporter (TC 2.A.1.7) family.

It localises to the cell inner membrane. Its function is as follows. Intake of glucose and galactose. The sequence is that of Glucose/galactose transporter (gluP) from Brucella abortus (strain 2308).